We begin with the raw amino-acid sequence, 344 residues long: Geranylgeranyl transferase type-2 subunit alpha (344 aa).

PFTA repeat units lie at residues 44–78 (YSEGNLKLTTELLDWNPETYSVWNYRREILLNDVF), 89–123 (LLDNELKYVLSKMKVFPKVYWIFNHRRWCLENAPY), 125–159 (NWNYEMMITEKLLSADARNFHGWHYRRYVVSQIER), 165–199 (LAKKEMEYTTSAIATNFSNFSALHNRTKLIETILN), 214–248 (ILEQELDMIHQAVFTDPDDSSVWIYHRWLMGHCNP), and 266–293 (YLQKEIELIQELHEMEPENRWCCESLVN).

Belongs to the protein prenyltransferase subunit alpha family. As to quaternary structure, heterodimer of an alpha and a beta subunit.

It carries out the reaction geranylgeranyl diphosphate + L-cysteinyl-[protein] = S-geranylgeranyl-L-cysteinyl-[protein] + diphosphate. Functionally, catalyzes the transfer of a geranyl-geranyl moiety from geranyl-geranyl pyrophosphate to proteins having the C-terminal-XCC or -XCXC, where both cysteines may become modified. This chain is Geranylgeranyl transferase type-2 subunit alpha (bet4), found in Schizosaccharomyces pombe (strain 972 / ATCC 24843) (Fission yeast).